The primary structure comprises 492 residues: Falcipain-3 (492 aa).

The Cytoplasmic segment spans residues 1–35 (MEYHMEYSPNEVIKQEREVFVGKEKSGSKFKRKRS). Positions 1–242 (MEYHMEYSPN…LNLKTHGPFK (242 aa)) are cleaved as a propeptide — activation peptide. The Bipartite vacuolar targeting signal 1 motif lies at 16–25 (EREVFVGKEK). A helical; Signal-anchor for type II membrane protein transmembrane segment spans residues 36 to 56 (IFIVLTVSICFMFALMLFYFT). Residues 57 to 492 (RNENNKTLFT…GTEAYVPLLE (436 aa)) are Lumenal-facing. N-linked (GlcNAc...) asparagine glycosylation is present at N61. The Bipartite vacuolar targeting signal 2 signature appears at 84 to 105 (KSESGKKFIVSKLEELISSYDK). N129 carries an N-linked (GlcNAc...) asparagine glycan. Residues 251 to 268 (EANYEDVIKKYKPADAKL) carry the Nose motif; required for the correct folding of the mature form motif. 4 disulfides stabilise this stretch: C290-C331, C324-C365, C350-C370, and C419-C480. Residue C293 is part of the active site. The active site involves H425. The short motif at 436–445 (DIYNEDTGRM) is the Arm motif; binds to host hemoglobin and required for the inhibitory interaction between the propeptide and the catalytic domain element. The active site involves N455.

The protein belongs to the peptidase C1 family. Post-translationally, auto-cleavage occurs at acidic pH. The proenzyme is the predominant form in late trophozoites and both the pro and mature enzyme are present in schizonts.

The protein localises to the membrane. The protein resides in the vacuole. It localises to the cytoplasmic vesicle membrane. With respect to regulation, inhibited by cysteine protease inhibitor ICP. Its function is as follows. Cysteine protease which cleaves native host hemoglobin and globin in the food vacuole during the asexual blood stage. Preferentially cleaves substrates which have an arginine at the P1 position and a leucine at the P2 position. The chain is Falcipain-3 from Plasmodium falciparum (isolate 3D7).